Consider the following 1293-residue polypeptide: Phosphoribosylformylglycinamidine synthase (1293 aa).

Residues 305–316 (GAATGSGGEIRD), 384–386 (TGY), and alanine 676 each bind ATP. The disordered stretch occupies residues 307–326 (ATGSGGEIRDEGATGRGSKP). 4 residues coordinate Mg(2+): aspartate 677, glutamate 716, asparagine 720, and aspartate 884. Residue serine 886 coordinates ATP. A Glutamine amidotransferase type-1 domain is found at 1040 to 1293 (MAILREQGVN…MFRNARVKIG (254 aa)). Catalysis depends on cysteine 1133, which acts as the Nucleophile. Catalysis depends on residues histidine 1258 and glutamate 1260.

It in the N-terminal section; belongs to the FGAMS family. Monomer.

The protein localises to the cytoplasm. It catalyses the reaction N(2)-formyl-N(1)-(5-phospho-beta-D-ribosyl)glycinamide + L-glutamine + ATP + H2O = 2-formamido-N(1)-(5-O-phospho-beta-D-ribosyl)acetamidine + L-glutamate + ADP + phosphate + H(+). The protein operates within purine metabolism; IMP biosynthesis via de novo pathway; 5-amino-1-(5-phospho-D-ribosyl)imidazole from N(2)-formyl-N(1)-(5-phospho-D-ribosyl)glycinamide: step 1/2. Phosphoribosylformylglycinamidine synthase involved in the purines biosynthetic pathway. Catalyzes the ATP-dependent conversion of formylglycinamide ribonucleotide (FGAR) and glutamine to yield formylglycinamidine ribonucleotide (FGAM) and glutamate. The polypeptide is Phosphoribosylformylglycinamidine synthase (Shewanella frigidimarina (strain NCIMB 400)).